A 505-amino-acid chain; its full sequence is DEAD-box ATP-dependent RNA helicase 38 (505 aa).

The segment at methionine 1–serine 81 is disordered. A compositionally biased stretch (low complexity) spans lysine 27–alanine 44. Positions alanine 100–alanine 129 match the Q motif motif. The region spanning methionine 134–isoleucine 310 is the Helicase ATP-binding domain. Alanine 147–threonine 154 is an ATP binding site. Positions aspartate 254–aspartate 257 match the DEAD box motif. The Helicase C-terminal domain maps to valine 338–aspartate 493.

It belongs to the DEAD box helicase family. DDX19/DBP5 subfamily.

It localises to the cytoplasm. The protein localises to the nucleus. The enzyme catalyses ATP + H2O = ADP + phosphate + H(+). Its function is as follows. ATP-dependent RNA helicase essential for mRNA export from the nucleus. Plays an important role in the positive regulation of CBF/DREB transcription factors. In Oryza sativa subsp. japonica (Rice), this protein is DEAD-box ATP-dependent RNA helicase 38.